Consider the following 335-residue polypeptide: Nucleoid-associated protein YejK (335 aa).

It belongs to the YejK family.

The protein resides in the cytoplasm. The protein localises to the nucleoid. The chain is Nucleoid-associated protein YejK from Salmonella enteritidis PT4 (strain P125109).